The primary structure comprises 140 residues: MTSLDQIIDDFAFLDEWEDRYRYVIELGKNLPEMPEVSRTSENKVQGCASQVWLVTHATGDAEDPLLTFEGESDAHIVRGLVAIVLAIFSGKRASEITRIDALDIFGKIGLIEHLSSQRANGLRSMIRRIKSEAEGRLPA.

This sequence belongs to the SufE family.

This is an uncharacterized protein from Rhizobium meliloti (strain 1021) (Ensifer meliloti).